Consider the following 380-residue polypeptide: Cytosolic acyl coenzyme A thioester hydrolase (380 aa).

The region spanning 50-168 (PCGACITGRI…TLWYVPLSLK (119 aa)) is the HotDog ACOT-type 1 domain. N66 is a catalytic residue. K168 and K198 each carry N6-acetyllysine. The HotDog ACOT-type 2 domain occupies 224-338 (SYSQSSLIHL…FFTYVSLSQE (115 aa)). The active site involves D255. Position 283 is an N6-acetyllysine (K283). The interval 350–380 (ETEDEKKRFEEGKGRYLQMKAKRQGHAEPQP) is disordered. Over residues 353-363 (DEKKRFEEGKG) the composition is skewed to basic and acidic residues.

Homohexamer. In terms of tissue distribution, isoform 4 is expressed exclusively in brain.

The protein resides in the cytoplasm. The protein localises to the cytosol. It is found in the mitochondrion. The catalysed reaction is hexadecanoyl-CoA + H2O = hexadecanoate + CoA + H(+). It carries out the reaction octanoyl-CoA + H2O = octanoate + CoA + H(+). It catalyses the reaction dodecanoyl-CoA + H2O = dodecanoate + CoA + H(+). The enzyme catalyses (9Z)-octadecenoyl-CoA + H2O = (9Z)-octadecenoate + CoA + H(+). The catalysed reaction is tetradecanoyl-CoA + H2O = tetradecanoate + CoA + H(+). It carries out the reaction decanoyl-CoA + H2O = decanoate + CoA + H(+). It catalyses the reaction octadecanoyl-CoA + H2O = octadecanoate + CoA + H(+). Its pathway is lipid metabolism; fatty acid metabolism. Its function is as follows. Catalyzes the hydrolysis of acyl-CoAs into free fatty acids and coenzyme A (CoASH), regulating their respective intracellular levels. Preferentially hydrolyzes palmitoyl-CoA, but has a broad specificity acting on other fatty acyl-CoAs with chain-lengths of C8-C18. May play an important physiological function in brain. In Homo sapiens (Human), this protein is Cytosolic acyl coenzyme A thioester hydrolase (ACOT7).